Reading from the N-terminus, the 363-residue chain is Probable aminomethyltransferase (363 aa).

Belongs to the GcvT family. As to quaternary structure, the glycine cleavage system is composed of four proteins: P, T, L and H.

It catalyses the reaction N(6)-[(R)-S(8)-aminomethyldihydrolipoyl]-L-lysyl-[protein] + (6S)-5,6,7,8-tetrahydrofolate = N(6)-[(R)-dihydrolipoyl]-L-lysyl-[protein] + (6R)-5,10-methylene-5,6,7,8-tetrahydrofolate + NH4(+). Functionally, the glycine cleavage system catalyzes the degradation of glycine. The protein is Probable aminomethyltransferase of Haloarcula marismortui (strain ATCC 43049 / DSM 3752 / JCM 8966 / VKM B-1809) (Halobacterium marismortui).